We begin with the raw amino-acid sequence, 161 residues long: MTKKKVKPNSNTIALNKRARHDYFIEDEIEAGLELQGWEVKSMRAGKANISDSYVIFKNGEAFLFGASIQPLNVASTHIVCDPTRTRKLLLNKRELASLFGKANRDGFTIVALSLYWKSAWAKVKIGLAKGKKQQDKRDDIKEREWKVTKDRIMKNAHRRS.

The protein belongs to the SmpB family.

The protein resides in the cytoplasm. In terms of biological role, required for rescue of stalled ribosomes mediated by trans-translation. Binds to transfer-messenger RNA (tmRNA), required for stable association of tmRNA with ribosomes. tmRNA and SmpB together mimic tRNA shape, replacing the anticodon stem-loop with SmpB. tmRNA is encoded by the ssrA gene; the 2 termini fold to resemble tRNA(Ala) and it encodes a 'tag peptide', a short internal open reading frame. During trans-translation Ala-aminoacylated tmRNA acts like a tRNA, entering the A-site of stalled ribosomes, displacing the stalled mRNA. The ribosome then switches to translate the ORF on the tmRNA; the nascent peptide is terminated with the 'tag peptide' encoded by the tmRNA and targeted for degradation. The ribosome is freed to recommence translation, which seems to be the essential function of trans-translation. The polypeptide is SsrA-binding protein (Haemophilus influenzae (strain 86-028NP)).